We begin with the raw amino-acid sequence, 366 residues long: Chorismate synthase (366 aa).

NADP(+) is bound by residues R48 and R54. Residues 125–127 (RSS), 238–239 (NA), G278, 293–297 (KPTSS), and R319 each bind FMN.

Belongs to the chorismate synthase family. Homotetramer. FMNH2 is required as a cofactor.

The catalysed reaction is 5-O-(1-carboxyvinyl)-3-phosphoshikimate = chorismate + phosphate. It participates in metabolic intermediate biosynthesis; chorismate biosynthesis; chorismate from D-erythrose 4-phosphate and phosphoenolpyruvate: step 7/7. Catalyzes the anti-1,4-elimination of the C-3 phosphate and the C-6 proR hydrogen from 5-enolpyruvylshikimate-3-phosphate (EPSP) to yield chorismate, which is the branch point compound that serves as the starting substrate for the three terminal pathways of aromatic amino acid biosynthesis. This reaction introduces a second double bond into the aromatic ring system. This Paraburkholderia xenovorans (strain LB400) protein is Chorismate synthase.